Reading from the N-terminus, the 426-residue chain is Serine--tRNA ligase (426 aa).

233–235 (TAE) contributes to the L-serine binding site. 264–266 (RRE) lines the ATP pocket. E287 contributes to the L-serine binding site. ATP is bound at residue 351–354 (EISS). Position 386 (S386) interacts with L-serine.

The protein belongs to the class-II aminoacyl-tRNA synthetase family. Type-1 seryl-tRNA synthetase subfamily. In terms of assembly, homodimer. The tRNA molecule binds across the dimer.

The protein localises to the cytoplasm. It catalyses the reaction tRNA(Ser) + L-serine + ATP = L-seryl-tRNA(Ser) + AMP + diphosphate + H(+). The enzyme catalyses tRNA(Sec) + L-serine + ATP = L-seryl-tRNA(Sec) + AMP + diphosphate + H(+). The protein operates within aminoacyl-tRNA biosynthesis; selenocysteinyl-tRNA(Sec) biosynthesis; L-seryl-tRNA(Sec) from L-serine and tRNA(Sec): step 1/1. Catalyzes the attachment of serine to tRNA(Ser). Is also able to aminoacylate tRNA(Sec) with serine, to form the misacylated tRNA L-seryl-tRNA(Sec), which will be further converted into selenocysteinyl-tRNA(Sec). The chain is Serine--tRNA ligase from Prochlorococcus marinus (strain NATL2A).